Reading from the N-terminus, the 293-residue chain is Elongation factor Ts (293 aa).

The interval 79-82 (TDFV) is involved in Mg(2+) ion dislocation from EF-Tu.

This sequence belongs to the EF-Ts family.

It is found in the cytoplasm. In terms of biological role, associates with the EF-Tu.GDP complex and induces the exchange of GDP to GTP. It remains bound to the aminoacyl-tRNA.EF-Tu.GTP complex up to the GTP hydrolysis stage on the ribosome. This Macrococcus caseolyticus (strain JCSC5402) (Macrococcoides caseolyticum) protein is Elongation factor Ts.